Here is a 21-residue protein sequence, read N- to C-terminus: 71 kDa F-actin-binding protein (21 aa).

To yeast fimbrin. The N-terminus is blocked.

Functionally, binds directly to F-actin and induces actin filament bundling. May function as a regulator of actin filament organization. The polypeptide is 71 kDa F-actin-binding protein (Tetrahymena pyriformis).